Consider the following 149-residue polypeptide: Protein NrdI (149 aa).

It belongs to the NrdI family.

Its function is as follows. Probably involved in ribonucleotide reductase function. The chain is Protein NrdI from Malacoplasma penetrans (strain HF-2) (Mycoplasma penetrans).